We begin with the raw amino-acid sequence, 401 residues long: Dual-specificity RNA methyltransferase RlmN (401 aa).

The Proton acceptor role is filled by Glu114. The 246-residue stretch at 120–365 (DKTRGTLCVS…TMVRRTRGDD (246 aa)) folds into the Radical SAM core domain. Cysteines 127 and 370 form a disulfide. [4Fe-4S] cluster is bound by residues Cys134, Cys138, and Cys141. S-adenosyl-L-methionine contacts are provided by residues 187-188 (GE), Ser219, 241-243 (SLH), and Asn327. Cys370 serves as the catalytic S-methylcysteine intermediate.

This sequence belongs to the radical SAM superfamily. RlmN family. [4Fe-4S] cluster is required as a cofactor.

It localises to the cytoplasm. The catalysed reaction is adenosine(2503) in 23S rRNA + 2 reduced [2Fe-2S]-[ferredoxin] + 2 S-adenosyl-L-methionine = 2-methyladenosine(2503) in 23S rRNA + 5'-deoxyadenosine + L-methionine + 2 oxidized [2Fe-2S]-[ferredoxin] + S-adenosyl-L-homocysteine. The enzyme catalyses adenosine(37) in tRNA + 2 reduced [2Fe-2S]-[ferredoxin] + 2 S-adenosyl-L-methionine = 2-methyladenosine(37) in tRNA + 5'-deoxyadenosine + L-methionine + 2 oxidized [2Fe-2S]-[ferredoxin] + S-adenosyl-L-homocysteine. In terms of biological role, specifically methylates position 2 of adenine 2503 in 23S rRNA and position 2 of adenine 37 in tRNAs. m2A2503 modification seems to play a crucial role in the proofreading step occurring at the peptidyl transferase center and thus would serve to optimize ribosomal fidelity. This chain is Dual-specificity RNA methyltransferase RlmN, found in Stenotrophomonas maltophilia (strain R551-3).